A 560-amino-acid polypeptide reads, in one-letter code: Aluminum-activated malate transporter 12 (560 aa).

6 helical membrane passes run 54–74, 78–98, 104–124, 130–150, 156–176, and 189–209; these read VGLS…FKGI, AIWA…ATLC, GLGT…ANDS, AIFI…IRFI, NYDY…VSSY, and FYTI…VFPI. The segment at 386–421 is disordered; sequence LHRHNNKHQNGSISNNKHHQRNSSNSGKDLNGDVSL. A compositionally biased stretch (polar residues) spans 407 to 421; the sequence is NSSNSGKDLNGDVSL.

The protein belongs to the aromatic acid exporter (TC 2.A.85) family. As to expression, expressed in roots, stems, leaves, flowers and pollen. Mainly detected in the roots vascular stele and in the leaves guard cells.

Its subcellular location is the cell membrane. Functionally, malate-sensitive anion transporter permeable to chloride, nitrate, sulfate and malate. Involved in dark-, CO(2)-, abscisic acid- and water-deficient-induced stomatal closure. Belongs to the R-type anion channels. The chain is Aluminum-activated malate transporter 12 (ALMT12) from Arabidopsis thaliana (Mouse-ear cress).